Here is a 545-residue protein sequence, read N- to C-terminus: Threonine--tRNA ligase catalytic subunit (545 aa).

A catalytic region spans residues 139-433 (DHRLIGEKLD…LLEHFKGKLP (295 aa)). Zn(2+) contacts are provided by Cys-231, His-282, and His-410.

The protein belongs to the class-II aminoacyl-tRNA synthetase family. As to quaternary structure, homodimer. Probably interacts with its editing subunit. Zn(2+) serves as cofactor.

It is found in the cytoplasm. The enzyme catalyses tRNA(Thr) + L-threonine + ATP = L-threonyl-tRNA(Thr) + AMP + diphosphate + H(+). Its function is as follows. Catalyzes the attachment of threonine to tRNA(Thr) in a two-step reaction: L-threonine is first activated by ATP to form Thr-AMP and then transferred to the acceptor end of tRNA(Thr). Also activates L-serine and transfers it to tRNA(Thr) but cannot deacylate incorrectly charged amino acid; unlike most archaea the editing function is found in a freestanding protein. The protein is Threonine--tRNA ligase catalytic subunit of Saccharolobus islandicus (strain Y.G.57.14 / Yellowstone #1) (Sulfolobus islandicus).